Here is a 953-residue protein sequence, read N- to C-terminus: 26S proteasome non-ATPase regulatory subunit 1 (953 aa).

N-acetylmethionine is present on Met1. Thr273 is subject to Phosphothreonine. The tract at residues 277-319 (SVPGSTNTGTVPGPEKDSDSMETEEKTAGAVAGKTPDASPEPK) is disordered. Basic and acidic residues predominate over residues 290–303 (PEKDSDSMETEEKT). Lys310 carries the N6-acetyllysine modification. Position 311 is a phosphothreonine (Thr311). Ser315 carries the post-translational modification Phosphoserine. PC repeat units lie at residues 403-436 (TATA…PGSA), 441-474 (GGLY…DIVR), 476-510 (GGSL…VTGE), 511-545 (AAGL…EKIL), 547-580 (GLAV…ILRR), 581-616 (SGMY…DVRR), 617-649 (AAVE…PHVR), 651-685 (GAAM…YVRQ), 686-726 (GALI…DVMA), and 729-761 (GAIL…PSVV). At Lys720 the chain carries N6-acetyllysine. Residue Thr830 is modified to Phosphothreonine. Residue Ser834 is modified to Phosphoserine. Disordered regions lie at residues 839–881 (AKKK…LDNP) and 930–953 (AHGP…YIDD). Basic and acidic residues-rich tracts occupy residues 842–852 (KEKEKEKKEEE) and 859–872 (AEKK…KEPE). Residues 936 to 953 (EEEEQEPEPPEPFEYIDD) show a composition bias toward acidic residues.

Belongs to the proteasome subunit S1 family. Component of the 19S proteasome regulatory particle complex. The 26S proteasome consists of a 20S core particle (CP) and two 19S regulatory subunits (RP). The regulatory particle is made of a lid composed of 9 subunits, a base containing 6 ATPases and few additional components including PSMD1. Interacts with ADRM1. Interacts with ZFAND1.

Its function is as follows. Component of the 26S proteasome, a multiprotein complex involved in the ATP-dependent degradation of ubiquitinated proteins. This complex plays a key role in the maintenance of protein homeostasis by removing misfolded or damaged proteins, which could impair cellular functions, and by removing proteins whose functions are no longer required. Therefore, the proteasome participates in numerous cellular processes, including cell cycle progression, apoptosis, or DNA damage repair. This Rattus norvegicus (Rat) protein is 26S proteasome non-ATPase regulatory subunit 1 (Psmd1).